Consider the following 236-residue polypeptide: Small ribosomal subunit protein eS6 (236 aa).

Ser232 and Ser233 each carry phosphoserine.

It belongs to the eukaryotic ribosomal protein eS6 family. Post-translationally, phosphorylated.

The protein is Small ribosomal subunit protein eS6 (RPS6A) of Candida glabrata (strain ATCC 2001 / BCRC 20586 / JCM 3761 / NBRC 0622 / NRRL Y-65 / CBS 138) (Yeast).